A 295-amino-acid polypeptide reads, in one-letter code: Acetylglutamate kinase (295 aa).

Substrate-binding positions include 70 to 71 (GG), Arg-92, and Asn-191.

Belongs to the acetylglutamate kinase family. ArgB subfamily.

Its subcellular location is the cytoplasm. The enzyme catalyses N-acetyl-L-glutamate + ATP = N-acetyl-L-glutamyl 5-phosphate + ADP. Its pathway is amino-acid biosynthesis; L-arginine biosynthesis; N(2)-acetyl-L-ornithine from L-glutamate: step 2/4. Catalyzes the ATP-dependent phosphorylation of N-acetyl-L-glutamate. The polypeptide is Acetylglutamate kinase (Mycolicibacterium paratuberculosis (strain ATCC BAA-968 / K-10) (Mycobacterium paratuberculosis)).